A 338-amino-acid chain; its full sequence is Ketol-acid reductoisomerase (NADP(+)) (338 aa).

The KARI N-terminal Rossmann domain maps to 1-181; sequence MKVFYDKDCD…GGGKAGIIET (181 aa). Residues 24–27, Arg-47, and Ser-52 each bind NADP(+); that span reads YGSQ. His-107 is a catalytic residue. Gly-133 contacts NADP(+). The region spanning 182–327 is the KARI C-terminal knotted domain; the sequence is NFKEETETDL…AQLRAMMPWI (146 aa). Positions 190, 194, 226, and 230 each coordinate Mg(2+). Ser-251 lines the substrate pocket.

This sequence belongs to the ketol-acid reductoisomerase family. Requires Mg(2+) as cofactor.

The enzyme catalyses (2R)-2,3-dihydroxy-3-methylbutanoate + NADP(+) = (2S)-2-acetolactate + NADPH + H(+). It carries out the reaction (2R,3R)-2,3-dihydroxy-3-methylpentanoate + NADP(+) = (S)-2-ethyl-2-hydroxy-3-oxobutanoate + NADPH + H(+). The protein operates within amino-acid biosynthesis; L-isoleucine biosynthesis; L-isoleucine from 2-oxobutanoate: step 2/4. It functions in the pathway amino-acid biosynthesis; L-valine biosynthesis; L-valine from pyruvate: step 2/4. Functionally, involved in the biosynthesis of branched-chain amino acids (BCAA). Catalyzes an alkyl-migration followed by a ketol-acid reduction of (S)-2-acetolactate (S2AL) to yield (R)-2,3-dihydroxy-isovalerate. In the isomerase reaction, S2AL is rearranged via a Mg-dependent methyl migration to produce 3-hydroxy-3-methyl-2-ketobutyrate (HMKB). In the reductase reaction, this 2-ketoacid undergoes a metal-dependent reduction by NADPH to yield (R)-2,3-dihydroxy-isovalerate. The sequence is that of Ketol-acid reductoisomerase (NADP(+)) from Acidovorax ebreus (strain TPSY) (Diaphorobacter sp. (strain TPSY)).